The chain runs to 389 residues: Chorismate synthase (389 aa).

2 residues coordinate NADP(+): R39 and R45. FMN is bound by residues 130 to 132 (RSS), 251 to 252 (NA), G296, 311 to 315 (KPIPT), and R338.

This sequence belongs to the chorismate synthase family. Homotetramer. The cofactor is FMNH2.

The enzyme catalyses 5-O-(1-carboxyvinyl)-3-phosphoshikimate = chorismate + phosphate. The protein operates within metabolic intermediate biosynthesis; chorismate biosynthesis; chorismate from D-erythrose 4-phosphate and phosphoenolpyruvate: step 7/7. Its function is as follows. Catalyzes the anti-1,4-elimination of the C-3 phosphate and the C-6 proR hydrogen from 5-enolpyruvylshikimate-3-phosphate (EPSP) to yield chorismate, which is the branch point compound that serves as the starting substrate for the three terminal pathways of aromatic amino acid biosynthesis. This reaction introduces a second double bond into the aromatic ring system. This chain is Chorismate synthase, found in Oceanobacillus iheyensis (strain DSM 14371 / CIP 107618 / JCM 11309 / KCTC 3954 / HTE831).